A 264-amino-acid polypeptide reads, in one-letter code: Thiazole synthase (264 aa).

Residue K106 is the Schiff-base intermediate with DXP of the active site. 1-deoxy-D-xylulose 5-phosphate is bound by residues G167, 193–194 (AG), and 215–216 (NT).

Belongs to the ThiG family. Homotetramer. Forms heterodimers with either ThiH or ThiS.

The protein localises to the cytoplasm. It catalyses the reaction [ThiS sulfur-carrier protein]-C-terminal-Gly-aminoethanethioate + 2-iminoacetate + 1-deoxy-D-xylulose 5-phosphate = [ThiS sulfur-carrier protein]-C-terminal Gly-Gly + 2-[(2R,5Z)-2-carboxy-4-methylthiazol-5(2H)-ylidene]ethyl phosphate + 2 H2O + H(+). Its pathway is cofactor biosynthesis; thiamine diphosphate biosynthesis. Functionally, catalyzes the rearrangement of 1-deoxy-D-xylulose 5-phosphate (DXP) to produce the thiazole phosphate moiety of thiamine. Sulfur is provided by the thiocarboxylate moiety of the carrier protein ThiS. In vitro, sulfur can be provided by H(2)S. In Xanthomonas oryzae pv. oryzae (strain MAFF 311018), this protein is Thiazole synthase.